The sequence spans 567 residues: Chitinase 3 (567 aa).

The signal sequence occupies residues methionine 1–alanine 16. Positions serine 23–alanine 313 constitute a GH18 domain. The Proton donor role is filled by glutamate 157. An N-linked (GlcNAc...) asparagine glycan is attached at asparagine 159. Residues alanine 313–threonine 471 are disordered. 2 stretches are compositionally biased toward low complexity: residues threonine 319–serine 436 and serine 444–threonine 471.

Belongs to the glycosyl hydrolase 18 family. Chitinase class III subfamily.

The protein resides in the secreted. It catalyses the reaction Random endo-hydrolysis of N-acetyl-beta-D-glucosaminide (1-&gt;4)-beta-linkages in chitin and chitodextrins.. Its function is as follows. Chitinase involved in the remodeling of chitin in the fungal cell wall. Plays a role in cell separation. This is Chitinase 3 (CHT3) from Candida albicans (strain SC5314 / ATCC MYA-2876) (Yeast).